Here is a 259-residue protein sequence, read N- to C-terminus: 5'-nucleotidase SurE (259 aa).

The a divalent metal cation site is built by Asp15, Asp16, Ser46, and Asn102.

It belongs to the SurE nucleotidase family. Requires a divalent metal cation as cofactor.

It is found in the cytoplasm. The catalysed reaction is a ribonucleoside 5'-phosphate + H2O = a ribonucleoside + phosphate. Nucleotidase that shows phosphatase activity on nucleoside 5'-monophosphates. The sequence is that of 5'-nucleotidase SurE from Chlorobium luteolum (strain DSM 273 / BCRC 81028 / 2530) (Pelodictyon luteolum).